Consider the following 193-residue polypeptide: ATP-dependent Clp protease proteolytic subunit (193 aa).

Residue serine 98 is the Nucleophile of the active site. Histidine 123 is a catalytic residue.

This sequence belongs to the peptidase S14 family. As to quaternary structure, fourteen ClpP subunits assemble into 2 heptameric rings which stack back to back to give a disk-like structure with a central cavity, resembling the structure of eukaryotic proteasomes.

It is found in the cytoplasm. It carries out the reaction Hydrolysis of proteins to small peptides in the presence of ATP and magnesium. alpha-casein is the usual test substrate. In the absence of ATP, only oligopeptides shorter than five residues are hydrolyzed (such as succinyl-Leu-Tyr-|-NHMec, and Leu-Tyr-Leu-|-Tyr-Trp, in which cleavage of the -Tyr-|-Leu- and -Tyr-|-Trp bonds also occurs).. Functionally, cleaves peptides in various proteins in a process that requires ATP hydrolysis. Has a chymotrypsin-like activity. Plays a major role in the degradation of misfolded proteins. The chain is ATP-dependent Clp protease proteolytic subunit from Pasteurella multocida (strain Pm70).